A 396-amino-acid polypeptide reads, in one-letter code: Elongation factor Tu 1 (396 aa).

One can recognise a tr-type G domain in the interval 10-206 (KPHCNIGTIG…AVDAYIPQPE (197 aa)). The G1 stretch occupies residues 19–26 (GHVDHGKT). 19 to 26 (GHVDHGKT) lines the GTP pocket. Residue threonine 26 coordinates Mg(2+). The tract at residues 60 to 64 (GITIS) is G2. Residues 81–84 (DCPG) are G3. GTP contacts are provided by residues 81–85 (DCPGH) and 136–139 (NKCD). The G4 stretch occupies residues 136 to 139 (NKCD). The G5 stretch occupies residues 174–176 (SAL).

The protein belongs to the TRAFAC class translation factor GTPase superfamily. Classic translation factor GTPase family. EF-Tu/EF-1A subfamily. As to quaternary structure, monomer.

Its subcellular location is the cytoplasm. The enzyme catalyses GTP + H2O = GDP + phosphate + H(+). In terms of biological role, GTP hydrolase that promotes the GTP-dependent binding of aminoacyl-tRNA to the A-site of ribosomes during protein biosynthesis. The protein is Elongation factor Tu 1 of Rhodopseudomonas palustris (strain BisB5).